A 221-amino-acid polypeptide reads, in one-letter code: Chaperone protein TorD (221 aa).

It belongs to the TorD/DmsD family. TorD subfamily.

It localises to the cytoplasm. In terms of biological role, involved in the biogenesis of TorA. Acts on TorA before the insertion of the molybdenum cofactor and, as a result, probably favors a conformation of the apoenzyme that is competent for acquiring the cofactor. The chain is Chaperone protein TorD from Psychrobacter sp. (strain PRwf-1).